We begin with the raw amino-acid sequence, 198 residues long: Chorion protein S19 (198 aa).

A signal peptide spans 1 to 16 (MNKFATLAVFISVCLA).

The protein belongs to the chorion protein S19 family.

It localises to the secreted. Its function is as follows. Chorion membrane (egg shell) protein; plays a role in protecting the egg from the environment. This is Chorion protein S19 (Cp19) from Drosophila virilis (Fruit fly).